The following is a 218-amino-acid chain: Adenylate kinase (218 aa).

10 to 15 (GAGKGT) contributes to the ATP binding site. An NMP region spans residues 30–59 (STGDMLRAAVKAQSELGMAAKKVMDEGGLV). AMP is bound by residues T31, R36, 57–59 (GLV), 85–88 (GFPR), and Q92. Residues 122–159 (GRRVHPASGRTYHIVFNPPAVEGKDDVTGEDLVQRDDD) form an LID region. Residues R123 and 132 to 133 (TY) contribute to the ATP site. AMP is bound by residues R156 and R167. G203 lines the ATP pocket.

Belongs to the adenylate kinase family. As to quaternary structure, monomer.

The protein localises to the cytoplasm. The catalysed reaction is AMP + ATP = 2 ADP. It participates in purine metabolism; AMP biosynthesis via salvage pathway; AMP from ADP: step 1/1. In terms of biological role, catalyzes the reversible transfer of the terminal phosphate group between ATP and AMP. Plays an important role in cellular energy homeostasis and in adenine nucleotide metabolism. The chain is Adenylate kinase from Chlorobaculum parvum (strain DSM 263 / NCIMB 8327) (Chlorobium vibrioforme subsp. thiosulfatophilum).